A 359-amino-acid polypeptide reads, in one-letter code: Nicotinate N-methyltransferase 1 (359 aa).

D226 lines the S-adenosyl-L-methionine pocket.

Belongs to the class I-like SAM-binding methyltransferase superfamily. Cation-independent O-methyltransferase family. As to expression, highly expressed in anthers, pistils, developing siliques, and developing seeds.

Its subcellular location is the cytoplasm. It localises to the cytosol. The enzyme catalyses nicotinate + S-adenosyl-L-methionine = N-methylnicotinate + S-adenosyl-L-homocysteine. Involved in nicotinate detoxification in planta. Catalyzes the conversion of nicotinate to N-methylnicotinate, which is a detoxified form of endogenous nicotinate in planta. The polypeptide is Nicotinate N-methyltransferase 1 (Arabidopsis thaliana (Mouse-ear cress)).